A 456-amino-acid chain; its full sequence is Gustatory receptor for sugar taste 64a (456 aa).

The interval 1–30 (MKGPNLNFRKTPSKDNGVKQVESLARPETP) is disordered. Over 1–91 (MKGPNLNFRK…RESNPRRVRF (91 aa)) the chain is Cytoplasmic. Residues 92–114 (AYKSIPMFVTLIFMIATSILFLS) traverse the membrane as a helical segment. Residues 115-128 (MFTHLLKIGITAKN) are Extracellular-facing. The chain crosses the membrane as a helical span at residues 129–150 (FVGLVFFGCVLSAYVVFIRLAK). Sucrose is bound at residue Gly131. Over 151-182 (KWPAVVRIWTRTEIPFTKPPYEIPKRNLSRRV) the chain is Cytoplasmic. Residues 183-205 (QLAALAIIGLSLGEHALYQVSAI) traverse the membrane as a helical segment. Positions 196, 197, and 234 each coordinate sucrose. Residues Glu196, His197, Tyr234, Asn253, and Thr257 each coordinate D-maltose. Residues 206–245 (LSYTRRIQMCANITTVPSFNNYMQTNYDYVFQLLPYSPII) lie on the Extracellular side of the membrane. Residues 246-271 (AVLILLINGACTFVWNYMDLFIMMIS) traverse the membrane as a helical segment. Position 257 (Thr257) interacts with sucrose. At 272-318 (KGLSYRFEQITTRIRKLEHEEVCESVFIQIREHYVKMCELLEFVDSA) the chain is on the cytoplasmic side. The helical transmembrane segment at 319–342 (MSSLILLSCVNNLYFVCYQLLNVF) threads the bilayer. Residues 343-350 (NKLRWPIN) lie on the Extracellular side of the membrane. A helical transmembrane segment spans residues 351-373 (YIYFWYSLLYLIGRTAFVFLTAA). Tyr353 is a sucrose binding site. A D-maltose-binding site is contributed by Tyr353. The Cytoplasmic portion of the chain corresponds to 374–421 (DINEESKRGLGVLRRVSSRSWCVEVERLIFQMTTQTVALSGKKFYFLT). Residues 422-441 (RRLLFGMAGTIVTYELVLLQ) form a helical membrane-spanning segment. The Extracellular segment spans residues 442–456 (FDEPNRRKGLQPLCA).

Belongs to the insect chemoreceptor superfamily. Gustatory receptor (GR) family. Gr5a subfamily. As to quaternary structure, homotetramer. In terms of tissue distribution, expressed in Gr5a-expressing sugar-sensing cells.

The protein localises to the cell membrane. Its function is as follows. One of the few identified sugar gustatory receptors identified so far and which promotes the starvation-induced increase of feeding motivation. Required in combination with Gr64f to detect sucrose, maltose, and glucose. This Drosophila melanogaster (Fruit fly) protein is Gustatory receptor for sugar taste 64a (Gr64a).